Consider the following 233-residue polypeptide: MIDQKVIVALDYDNQADALAFVDRIDPASCRLKVGKEMFTLFGPDFVRELHKRGFSVFLDLKFHDIPNTCSKAVRAAAELGVWMVNVHASGGERMMTASREILEPYGKDRPLLIGVTVLTSMEQSDLAGIGLNVEPQEQVIRLATLTKNSGLDGVVCSAQESSLLKNELGKEFKLITPGIRPAGSDQGDQRRIMTPVDAIQAGSDYLVIGRPITQATDPAAVLKSINDSLASK.

Residues Asp11, Lys33, 60–69 (DLKFHDIPNT), Thr120, Arg181, Gln190, Gly210, and Arg211 contribute to the substrate site. The active-site Proton donor is the Lys62.

Belongs to the OMP decarboxylase family. Type 1 subfamily. In terms of assembly, homodimer.

The enzyme catalyses orotidine 5'-phosphate + H(+) = UMP + CO2. It participates in pyrimidine metabolism; UMP biosynthesis via de novo pathway; UMP from orotate: step 2/2. Functionally, catalyzes the decarboxylation of orotidine 5'-monophosphate (OMP) to uridine 5'-monophosphate (UMP). The polypeptide is Orotidine 5'-phosphate decarboxylase (Vibrio parahaemolyticus serotype O3:K6 (strain RIMD 2210633)).